Here is a 404-residue protein sequence, read N- to C-terminus: Probable tRNA sulfurtransferase (404 aa).

The THUMP domain maps to 61 to 166 (QTLVTGLPKI…HDATYMMAQV (106 aa)). ATP-binding positions include 184-185 (ML), 209-210 (HF), arginine 266, glycine 288, and glutamine 297.

Belongs to the ThiI family.

It localises to the cytoplasm. It catalyses the reaction [ThiI sulfur-carrier protein]-S-sulfanyl-L-cysteine + a uridine in tRNA + 2 reduced [2Fe-2S]-[ferredoxin] + ATP + H(+) = [ThiI sulfur-carrier protein]-L-cysteine + a 4-thiouridine in tRNA + 2 oxidized [2Fe-2S]-[ferredoxin] + AMP + diphosphate. The enzyme catalyses [ThiS sulfur-carrier protein]-C-terminal Gly-Gly-AMP + S-sulfanyl-L-cysteinyl-[cysteine desulfurase] + AH2 = [ThiS sulfur-carrier protein]-C-terminal-Gly-aminoethanethioate + L-cysteinyl-[cysteine desulfurase] + A + AMP + 2 H(+). It functions in the pathway cofactor biosynthesis; thiamine diphosphate biosynthesis. Its function is as follows. Catalyzes the ATP-dependent transfer of a sulfur to tRNA to produce 4-thiouridine in position 8 of tRNAs, which functions as a near-UV photosensor. Also catalyzes the transfer of sulfur to the sulfur carrier protein ThiS, forming ThiS-thiocarboxylate. This is a step in the synthesis of thiazole, in the thiamine biosynthesis pathway. The sulfur is donated as persulfide by IscS. This is Probable tRNA sulfurtransferase from Lysinibacillus sphaericus (strain C3-41).